The following is a 589-amino-acid chain: Protein sprouty (589 aa).

3 disordered regions span residues 1-37 (MDRRNGGDPLAPPRPPKLLPRVHRPRAPEPTLSGVDH), 102-194 (RPSS…RPES), and 239-320 (LHLQ…MGLG). Composition is skewed to low complexity over residues 104–135 (SSLSRNSSTASSTTATGISVSGSGSVSGSSSS) and 148–162 (NNSISNNNNNSINNN). A compositionally biased stretch (polar residues) spans 163–172 (FLSHFQSAEP). Positions 239-272 (LHLQQHQQHLQQQQQQQQQQQQQQHLQHQQNQQH) are enriched in low complexity. The segment covering 276-286 (ATTTQATSVGS) has biased composition (polar residues). One can recognise an SPR domain in the interval 380 to 499 (RCGRCRCEQC…CYGRFAGRGC (120 aa)).

It belongs to the sprouty family. In terms of assembly, interacts with DRK and RasGAP1 proteins of the Ras pathway. In ovary, expressed from stage 7 of oogenesis in the posterior follicle cells and during stage 9 when the follicle cells migrate posteriorly over the oocyte nucleus, expression is seen in the dorsal and lateral cells and is excluded from the ventral cells. Once the migration of follicle cells is complete expressed in the dorsal-anterior corner of the egg chamber. Expressed in the embryonic tracheal system, developing eye imaginal disk, embryonic chordotonal organ precursors, midline glia and wing imaginal disk.

Its subcellular location is the cell membrane. Functionally, inhibitor of tracheal branching that restricts branch budding by antagonizing the BNL-FGF pathway (BNL: branchless, an fgf inducer of branching). Acts as an antagonist of EGFR-mediated signaling in the eye (where it is important for cell determination) midline glia, chordotonal organs, wing and ovarian follicle cells. In Drosophila melanogaster (Fruit fly), this protein is Protein sprouty (sty).